We begin with the raw amino-acid sequence, 479 residues long: Neuronal acetylcholine receptor subunit alpha-9 (479 aa).

The N-terminal stretch at 1-22 is a signal peptide; it reads MNWSHSCISFCWIYFAASRLRA. Residues 23–238 lie on the Extracellular side of the membrane; it reads AETADGKYAQ…FTLLLKRRSS (216 aa). Residue Asn-57 is glycosylated (N-linked (GlcNAc...) asparagine). Cys-155 and Cys-169 are disulfide-bonded. A glycan (N-linked (GlcNAc...) asparagine) is linked at Asn-170. Na(+) is bound by residues Ser-191 and Asp-193. Residues Cys-219 and Cys-220 are joined by a disulfide bond. A run of 3 helical transmembrane segments spans residues 239-259, 269-289, and 303-323; these read FYIV…PLSF, VSLG…VAEI, and YIAT…VMNI. Topologically, residues 324 to 457 are cytoplasmic; sequence HFCGAEARPV…WKKVAKVIDR (134 aa). Residues 458-478 form a helical membrane-spanning segment; that stretch reads FFMWIFFIMVFVMTILIIARA.

This sequence belongs to the ligand-gated ion channel (TC 1.A.9) family. Acetylcholine receptor (TC 1.A.9.1) subfamily. Alpha-9/CHRNA9 sub-subfamily. As to quaternary structure, forms homo- or heteropentameric channels in conjunction with CHRNA10. The native outer hair cell receptor is composed of CHRNA9:CHRNA10 heterooligomers. Found in the stoichiometric form (CHRNA9)2:(CHRNA10)3. N-glycosylated. Expressed in cochlea, keratinocytes, pituitary gland, B-cells and T-cells.

It is found in the synaptic cell membrane. The protein resides in the cell membrane. It carries out the reaction Ca(2+)(in) = Ca(2+)(out). The enzyme catalyses K(+)(in) = K(+)(out). It catalyses the reaction Na(+)(in) = Na(+)(out). The catalysed reaction is Mg(2+)(in) = Mg(2+)(out). With respect to regulation, activated by a myriad of ligands such as acetylcholine. AChR activity is inhibited by the antagonist alpha-conotoxins RgIA and GeXXA, small disulfide-constrained peptides from cone snails. Its function is as follows. Component of neuronal acetylcholine receptors (nAChRs) that function as pentameric, ligand-gated cation channels with high calcium permeability among other activities. nAChRs are excitatory neurotrasnmitter receptors formed by a collection of nAChR subunits known to mediate synaptic transmission in the nervous system and the neuromuscular junction. Each nAchR subunit confers differential attributes to channel properties, including activation, deactivation and desensitization kinetics, pH sensitivity, cation permeability, and binding to allosteric modulators. Forms either homopentamers or heteropentamers with CHRNA10. Expressed in the inner ear, in sympathetic neurons and in other non-neuronal cells, such as skin keratinocytes and lymphocytes. nAChR formed by CHRNA9:CHRNA10 mediate central nervous system control of auditory and vestibular sensory processing. The channel is permeable to a range of divalent cations including calcium, the influx of which may activate a potassium current which hyperpolarizes the cell membrane. In the ear, mediates synaptic transmission between efferent olivocochlear fibers and hair cells of the cochlea, this may lead to a reduction in basilar membrane motion, altering the activity of auditory nerve fibers and reducing the range of dynamic hearing. This may protect against acoustic trauma. May also regulate keratinocyte adhesion. This is Neuronal acetylcholine receptor subunit alpha-9 from Homo sapiens (Human).